A 511-amino-acid chain; its full sequence is Histidine ammonia-lyase (511 aa).

A cross-link (5-imidazolinone (Ala-Gly)) is located at residues 142-144 (ASG). Ser143 carries the 2,3-didehydroalanine (Ser) modification.

Belongs to the PAL/histidase family. Contains an active site 4-methylidene-imidazol-5-one (MIO), which is formed autocatalytically by cyclization and dehydration of residues Ala-Ser-Gly.

The protein resides in the cytoplasm. The enzyme catalyses L-histidine = trans-urocanate + NH4(+). The protein operates within amino-acid degradation; L-histidine degradation into L-glutamate; N-formimidoyl-L-glutamate from L-histidine: step 1/3. The protein is Histidine ammonia-lyase of Brucella abortus (strain S19).